The following is a 403-amino-acid chain: Flavohemoprotein (403 aa).

The Globin domain maps to 1–138 (MLTQKTKDIV…LADVLMGMES (138 aa)). His-85 is a heme b binding site. Residues Tyr-95 and Glu-137 each act as charge relay system in the active site. The tract at residues 149-403 (GGWKGWRTFV…EVFGPDLFAE (255 aa)) is reductase. Residues 152–262 (KGWRTFVIRE…AAPYGSFHID (111 aa)) form the FAD-binding FR-type domain. Residues Tyr-190 and 206–209 (RQYS) contribute to the FAD site. Residue 275–280 (GVGLTP) participates in NADP(+) binding. Residue 395-398 (VFGP) participates in FAD binding.

Belongs to the globin family. Two-domain flavohemoproteins subfamily. This sequence in the C-terminal section; belongs to the flavoprotein pyridine nucleotide cytochrome reductase family. As to quaternary structure, monomer. The cofactor is FAD. Heme b is required as a cofactor.

Its subcellular location is the cytoplasm. The enzyme catalyses 2 nitric oxide + NADPH + 2 O2 = 2 nitrate + NADP(+) + H(+). It carries out the reaction 2 nitric oxide + NADH + 2 O2 = 2 nitrate + NAD(+) + H(+). Its function is as follows. Is involved in NO detoxification in an aerobic process, termed nitric oxide dioxygenase (NOD) reaction that utilizes O(2) and NAD(P)H to convert NO to nitrate, which protects the bacterium from various noxious nitrogen compounds. Therefore, plays a central role in the inducible response to nitrosative stress. Functionally, in the presence of oxygen and NADH, FHP has NADH oxidase activity, which leads to the generation of superoxide and H(2)O(2), both in vitro and in vivo, and it has been suggested that FHP might act as an amplifier of superoxide stress. Under anaerobic conditions, FHP also exhibits nitric oxide reductase and FAD reductase activities. However, all these reactions are much lower than NOD activity. This chain is Flavohemoprotein (hmp), found in Cupriavidus necator (strain ATCC 17699 / DSM 428 / KCTC 22496 / NCIMB 10442 / H16 / Stanier 337) (Ralstonia eutropha).